Reading from the N-terminus, the 273-residue chain is Shikimate dehydrogenase (NADP(+)) (273 aa).

Residues 14–16 and threonine 61 each bind shikimate; that span reads SKS. Catalysis depends on lysine 65, which acts as the Proton acceptor. Asparagine 86 and aspartate 102 together coordinate shikimate. NADP(+) contacts are provided by residues 126-130, 150-155, and methionine 213; these read GAGGA and NRTHAK. Tyrosine 215 lines the shikimate pocket. Glycine 237 lines the NADP(+) pocket.

Belongs to the shikimate dehydrogenase family. Homodimer.

It catalyses the reaction shikimate + NADP(+) = 3-dehydroshikimate + NADPH + H(+). The protein operates within metabolic intermediate biosynthesis; chorismate biosynthesis; chorismate from D-erythrose 4-phosphate and phosphoenolpyruvate: step 4/7. Involved in the biosynthesis of the chorismate, which leads to the biosynthesis of aromatic amino acids. Catalyzes the reversible NADPH linked reduction of 3-dehydroshikimate (DHSA) to yield shikimate (SA). The chain is Shikimate dehydrogenase (NADP(+)) from Aeromonas salmonicida (strain A449).